The sequence spans 172 residues: Iron-sulfur cluster assembly protein SufA (172 aa).

Residues 1–19 (MFINIFLFLFAATINISSS) form the signal peptide. [4Fe-4S] cluster is bound by residues C96, C164, and C166.

The protein belongs to the HesB/IscA family. As to quaternary structure, homodimer.

The protein resides in the plastid. Its subcellular location is the apicoplast. Its pathway is cofactor biosynthesis; iron-sulfur cluster biosynthesis. In terms of biological role, participates in the sulfur mobilization (SUF) pathway for iron-sulfur (Fe-S) cluster biogenesis. Involved in the pre-assembly of [4Fe-4S] clusters and their transfer to target proteins. The protein is Iron-sulfur cluster assembly protein SufA of Plasmodium berghei (strain Anka).